We begin with the raw amino-acid sequence, 445 residues long: Methylenetetrahydrofolate--tRNA-(uracil-5-)-methyltransferase TrmFO (445 aa).

10-15 (GGGLAG) contacts FAD.

The protein belongs to the MnmG family. TrmFO subfamily. Requires FAD as cofactor.

The protein localises to the cytoplasm. It carries out the reaction uridine(54) in tRNA + (6R)-5,10-methylene-5,6,7,8-tetrahydrofolate + NADH + H(+) = 5-methyluridine(54) in tRNA + (6S)-5,6,7,8-tetrahydrofolate + NAD(+). It catalyses the reaction uridine(54) in tRNA + (6R)-5,10-methylene-5,6,7,8-tetrahydrofolate + NADPH + H(+) = 5-methyluridine(54) in tRNA + (6S)-5,6,7,8-tetrahydrofolate + NADP(+). Functionally, catalyzes the folate-dependent formation of 5-methyl-uridine at position 54 (M-5-U54) in all tRNAs. This is Methylenetetrahydrofolate--tRNA-(uracil-5-)-methyltransferase TrmFO from Microcystis aeruginosa (strain NIES-843 / IAM M-2473).